The primary structure comprises 183 residues: Ubiquitin carboxyl-terminal hydrolase 17-like protein 23 (183 aa).

The USP domain occupies 80–183; that stretch reads AGLQNMGNTC…KACLPGHKQV (104 aa).

It belongs to the peptidase C19 family. USP17 subfamily.

Its subcellular location is the nucleus. The protein resides in the endoplasmic reticulum. The sequence is that of Ubiquitin carboxyl-terminal hydrolase 17-like protein 23 (USP17L23) from Homo sapiens (Human).